A 199-amino-acid polypeptide reads, in one-letter code: uncharacterized protein (199 aa).

Positions Met1–Thr48 are disordered. Ser2 bears the N-acetylserine mark. Low complexity predominate over residues Tyr7–Gln21. Positions Glu22–Gln31 are enriched in polar residues. A phosphoserine mark is found at Ser53 and Ser70. Residues Arg89–Trp199 are disordered. 3 stretches are compositionally biased toward gly residues: residues Gly124 to Gly163, Gly170 to Gly179, and Gly186 to Trp199.

The protein localises to the mitochondrion. This is an uncharacterized protein from Saccharomyces cerevisiae (strain ATCC 204508 / S288c) (Baker's yeast).